The following is a 518-amino-acid chain: Glycerophosphoinositol transporter 1 (518 aa).

Residues 1-44 (MEDKDITSVNEKEVNENTNPRIIKYDAERRATRTETSKKDKWKN) are Cytoplasmic-facing. Residues 45–65 (IVTIIASGFALISDGYVNGSM) traverse the membrane as a helical segment. Residues 66–91 (SMLNKVFVMEYGKKNYSSKVSTRVSN) are Extracellular-facing. The N-linked (GlcNAc...) asparagine glycan is linked to Asn80. The helical transmembrane segment at 92-112 (AALVGIIFGQFFMGIAADYYS) threads the bilayer. Topologically, residues 113–114 (RK) are cytoplasmic. Residues 115-136 (SCILVATAILVIGSALCAASHG) traverse the membrane as a helical segment. Residues 137 to 138 (TT) lie on the Extracellular side of the membrane. Residues 139–159 (VPGMFWMLTVMRGLVGIGVGA) form a helical membrane-spanning segment. The Cytoplasmic portion of the chain corresponds to 160–184 (EYPTSTLSANESANEYTTTKRGGIL). Residues 185–205 (VMVTNLPLAFGGPFATIIFLI) form a helical membrane-spanning segment. Residues 206 to 216 (VYKICSGTKHL) are Extracellular-facing. A helical membrane pass occupies residues 217–237 (EAIWRTVFAIGCFWPLSVFYF). Residues 238 to 268 (RWKTATTEVYEKGRIKRNIPYFLALKFYWKR) are Cytoplasmic-facing. The chain crosses the membrane as a helical span at residues 269-289 (LLGTCGTWFMYDFVTFPNGIF). Residues 290 to 306 (SSTIISSVIKDQNDLVK) lie on the Extracellular side of the membrane. Residues 307–327 (VAEWNLLLGVLAVLGVPIGAY) traverse the membrane as a helical segment. The Cytoplasmic segment spans residues 328–335 (LSDRIGRK). A helical membrane pass occupies residues 336 to 356 (YTLMFGFSGYIIFGLIIGCAY). Residues 357–360 (DQLK) lie on the Extracellular side of the membrane. A helical transmembrane segment spans residues 361-381 (KITPLFIIFYAFMNMLGNAGP). Residues 382–399 (GDMLGVISSEASATAVRG) lie on the Cytoplasmic side of the membrane. Residues 400–420 (VFYGLSAVTGKIGSVVGVECF) form a helical membrane-spanning segment. Over 421-430 (QPIRDNLGAR) the chain is Extracellular. The chain crosses the membrane as a helical span at residues 431–451 (WTFIIAAICGLIGIIITYFFV). The Cytoplasmic portion of the chain corresponds to 452–518 (PHSLESDLMK…IISVRQVDQS (67 aa)).

It belongs to the major facilitator superfamily. Sugar transporter (TC 2.A.1.1) family.

The protein resides in the cell membrane. The enzyme catalyses sn-glycerol 3-phosphocholine(out) = sn-glycerol 3-phosphocholine(in). It catalyses the reaction sn-glycero-3-phospho-1D-myo-inositol(out) = sn-glycero-3-phospho-1D-myo-inositol(in). Functionally, glycerophosphodiester transporter that mediates uptake of both glycerophosphoinositol (GroPIns) and glycerophosphocholine (GroPCho) as sources of the nutrients inositol and phosphate. This is Glycerophosphoinositol transporter 1 from Saccharomyces cerevisiae (strain ATCC 204508 / S288c) (Baker's yeast).